We begin with the raw amino-acid sequence, 538 residues long: Cytosolic Fe-S cluster assembly factor NAR1 homolog (538 aa).

The [4Fe-4S] cluster site is built by Cys19, Cys64, Cys67, Cys70, Cys218, Cys273, Cys453, and Cys457.

The protein belongs to the NARF family.

The protein resides in the cytoplasm. It localises to the nucleus. Functionally, component of the cytosolic Fe/S protein assembly machinery. Required for maturation of extramitochondrial Fe/S proteins. May play a role in the transfer of pre-assembled Fe/S clusters to target apoproteins. This is Cytosolic Fe-S cluster assembly factor NAR1 homolog from Schizosaccharomyces pombe (strain 972 / ATCC 24843) (Fission yeast).